Reading from the N-terminus, the 138-residue chain is Hexon-interlacing protein (138 aa).

Positions 100-127 (LLVLLAQLEALTQRLGELSKQVAQLREQ) form a coiled coil.

This sequence belongs to the adenoviridae hexon-interlacing protein family. Homotrimer. Interacts with hexon protein; this interaction tethers the hexons together. Self-interacts with adjacent proteins. Interacts with kinesin light chain KLC1; this interaction leads to capsid disruption at the nuclear pore complex during virus entry into host cell.

It localises to the virion. Its subcellular location is the host nucleus. Functionally, structural component of the virion that acts as a cement protein on the capsid exterior and forms triskelion structures consisting of three molecules that stabilize three hexon trimers at the center of each icosahedral facet and fixes the peripentonal hexons. Dispensable for assembly. During virus entry, recruits the anterograde motor kinesin-1 to the capsid docked at the nuclear pore complex thereby subjecting the docked capsid to a pulling force. The resulting tension leads to capsid disruption, dispersion of capsid fragments toward cell periphery and eventually viral DNA entry into the host nucleus. The sequence is that of Hexon-interlacing protein from Human adenovirus B serotype 7 (HAdV-7).